The chain runs to 309 residues: Olfactory receptor 1A1 (309 aa).

Over Met-1–Asp-25 the chain is Extracellular. N-linked (GlcNAc...) asparagine glycosylation occurs at Asn-5. The helical transmembrane segment at Phe-26–Ile-49 threads the bilayer. Topologically, residues Cys-50 to Asn-57 are cytoplasmic. The helical transmembrane segment at Pro-58–Pro-79 threads the bilayer. The Extracellular segment spans residues Lys-80–Gln-100. Cys-97 and Cys-189 are disulfide-bonded. The chain crosses the membrane as a helical span at residues Met-101 to Tyr-120. The Cytoplasmic portion of the chain corresponds to Asp-121 to Arg-139. The chain crosses the membrane as a helical span at residues Ser-140 to Pro-158. At His-159–His-195 the chain is on the extracellular side. Residues Val-196 to Ile-218 form a helical membrane-spanning segment. Over Arg-219–Lys-235 the chain is Cytoplasmic. The chain crosses the membrane as a helical span at residues Ala-236–Tyr-258. The Extracellular portion of the chain corresponds to Phe-259 to Ala-270. An N-linked (GlcNAc...) asparagine glycan is attached at Asn-264. Residues Val-271–Leu-290 form a helical membrane-spanning segment. At Arg-291–Ser-309 the chain is on the cytoplasmic side.

Belongs to the G-protein coupled receptor 1 family.

It localises to the cell membrane. In terms of biological role, odorant receptor. The chain is Olfactory receptor 1A1 (OR1A1) from Homo sapiens (Human).